The primary structure comprises 445 residues: DNA repair protein RadA (445 aa).

Residues cysteine 10–cysteine 27 form a C4-type zinc finger. An ATP-binding site is contributed by glycine 90–serine 97. The short motif at lysine 249 to glycine 253 is the RadA KNRFG motif element. Positions glutamate 348 to lysine 445 are lon-protease-like.

Belongs to the RecA family. RadA subfamily.

Functionally, DNA-dependent ATPase involved in processing of recombination intermediates, plays a role in repairing DNA breaks. Stimulates the branch migration of RecA-mediated strand transfer reactions, allowing the 3' invading strand to extend heteroduplex DNA faster. Binds ssDNA in the presence of ADP but not other nucleotides, has ATPase activity that is stimulated by ssDNA and various branched DNA structures, but inhibited by SSB. Does not have RecA's homology-searching function. The sequence is that of DNA repair protein RadA from Rickettsia typhi (strain ATCC VR-144 / Wilmington).